Here is a 256-residue protein sequence, read N- to C-terminus: L-rhamnose 1-dehydrogenase (NAD(P)(+)) (256 aa).

8 residues coordinate NADP(+): G12, S14, R15, I17, S37, D66, A67, and N93. The Proton donor role is filled by S146. Beta-L-rhamnose is bound by residues S146, S148, Q156, and Y159. 2 residues coordinate NADP(+): Y159 and K163. Y159 (proton acceptor) is an active-site residue. K163 serves as the catalytic Lowers pKa of active site Tyr. Beta-L-rhamnose is bound at residue T191. Residue I192 coordinates NADP(+). N197 contributes to the beta-L-rhamnose binding site.

It belongs to the short-chain dehydrogenases/reductases (SDR) family.

It carries out the reaction L-rhamnofuranose + NAD(+) = L-rhamnono-1,4-lactone + NADH + H(+). The enzyme catalyses L-rhamnofuranose + NADP(+) = L-rhamnono-1,4-lactone + NADPH + H(+). It functions in the pathway carbohydrate degradation; L-rhamnose degradation. Its function is as follows. NAD(P)-dependent dehydrogenase that catalyzes the oxidation of L-rhamnose to L-rhamnono-1,4-lactone. Also shows high activity with L-lyxose and low activity with L-mannose and L-fucose. Can utilize either NAD(+) or NADP(+), with a strong preference for NADP(+). Catalyzes the first step in an alternative pathway for rhamnose utilization that does not involve phosphorylated intermediates. The chain is L-rhamnose 1-dehydrogenase (NAD(P)(+)) from Azotobacter vinelandii (strain DJ / ATCC BAA-1303).